The chain runs to 790 residues: Probable quinate dehydrogenase (quinone) (790 aa).

Helical transmembrane passes span 22–42 (GSWYFLLMGLATALAGVLIVL), 48–68 (ALVYGVAFALTLVWALWDAGL), 77–94 (LMLPAAFAVLVALAWPAL), and 106–126 (AYGVATVLALAVVAGIGGMFV). The tract at residues 171-200 (RSNGRPAAGSPGPTTPGEIANSDGNGAEDQ) is disordered. Positions 174–187 (GRPAAGSPGPTTPG) are enriched in low complexity.

Belongs to the bacterial PQQ dehydrogenase family. Pyrroloquinoline quinone serves as cofactor.

The protein localises to the cell membrane. The enzyme catalyses L-quinate + a quinone = 3-dehydroquinate + a quinol. Its pathway is aromatic compound metabolism; 3,4-dihydroxybenzoate biosynthesis; 3-dehydroquinate from D-quinate (PQQ route): step 1/1. The polypeptide is Probable quinate dehydrogenase (quinone) (qumA) (Xanthomonas campestris pv. juglandis (Xanthomonas arboricola pv. juglandis)).